Reading from the N-terminus, the 366-residue chain is tRNA-specific 2-thiouridylase MnmA (366 aa).

ATP contacts are provided by residues 6-13 (AMSGGVDS) and Leu-32. Cys-101 functions as the Nucleophile in the catalytic mechanism. Cys-101 and Cys-197 are joined by a disulfide. Gly-125 serves as a coordination point for ATP. The segment at 147–149 (KDQ) is interaction with tRNA. The active-site Cysteine persulfide intermediate is the Cys-197.

It belongs to the MnmA/TRMU family.

The protein resides in the cytoplasm. It carries out the reaction S-sulfanyl-L-cysteinyl-[protein] + uridine(34) in tRNA + AH2 + ATP = 2-thiouridine(34) in tRNA + L-cysteinyl-[protein] + A + AMP + diphosphate + H(+). Functionally, catalyzes the 2-thiolation of uridine at the wobble position (U34) of tRNA, leading to the formation of s(2)U34. The chain is tRNA-specific 2-thiouridylase MnmA from Cutibacterium acnes (strain DSM 16379 / KPA171202) (Propionibacterium acnes).